The sequence spans 158 residues: RNA pyrophosphohydrolase (158 aa).

The 145-residue stretch at P8 to E152 folds into the Nudix hydrolase domain. Positions G42–G63 match the Nudix box motif.

This sequence belongs to the Nudix hydrolase family. RppH subfamily. A divalent metal cation serves as cofactor.

Functionally, accelerates the degradation of transcripts by removing pyrophosphate from the 5'-end of triphosphorylated RNA, leading to a more labile monophosphorylated state that can stimulate subsequent ribonuclease cleavage. This chain is RNA pyrophosphohydrolase, found in Sphingopyxis alaskensis (strain DSM 13593 / LMG 18877 / RB2256) (Sphingomonas alaskensis).